A 99-amino-acid polypeptide reads, in one-letter code: Plastocyanin A'/A'' (99 aa).

The Plastocyanin-like domain occupies 1 to 99; sequence IEVLLGSDDG…AGMVGKVTVN (99 aa). Cu cation contacts are provided by His-37, Cys-84, His-87, and Met-92.

Belongs to the plastocyanin family. Cu(2+) is required as a cofactor.

The protein localises to the plastid. It localises to the chloroplast thylakoid membrane. Functionally, participates in electron transfer between P700 and the cytochrome b6-f complex in photosystem I. This is Plastocyanin A'/A'' from Nicotiana tabacum (Common tobacco).